The chain runs to 1164 residues: DNA-directed RNA polymerase 132 kDa polypeptide (1164 aa).

Belongs to the RNA polymerase beta chain family. As to quaternary structure, the DNA-dependent RNA polymerase used for intermediate and late genes expression consists of eight subunits (147) kDa, (133) kDa, (35) kDa, (30) kDa, (22) kDa, (19) kDa, (18) kDa and (7) kDa totalling more than 500 kDa in mass. The same holoenzyme, with the addition of the transcription-specificity factor RAP94, is used for early gene expression.

Its subcellular location is the virion. The enzyme catalyses RNA(n) + a ribonucleoside 5'-triphosphate = RNA(n+1) + diphosphate. Its function is as follows. Part of the DNA-dependent RNA polymerase which catalyzes the transcription of viral DNA into RNA using the four ribonucleoside triphosphates as substrates. Responsible for the transcription of early, intermediate and late genes. DNA-dependent RNA polymerase associates with the early transcription factor (ETF), itself composed of D6 and A7, thereby allowing the early genes transcription. Late transcription, and probably also intermediate transcription, require newly synthesized RNA polymerase. The sequence is that of DNA-directed RNA polymerase 132 kDa polypeptide (RPO132) from Oryctolagus cuniculus (Rabbit).